Consider the following 278-residue polypeptide: Leucine-rich repeat-containing protein 10 (278 aa).

LRR repeat units follow at residues 30–51, 52–74, 76–97, 98–121, 123–143, 144–166, 167–189, and 191–213; these read LDRM…VCSF, QELV…LGQL, NLQI…VCTL, KQLC…SLLQ, LRTL…VCEL, SLLK…LQRL, RELR…LLHM, and FLEI…HLSS. Over residues 239-250 the composition is skewed to basic and acidic residues; the sequence is RWAEETPEPDPR. The disordered stretch occupies residues 239–278; sequence RWAEETPEPDPRKARRYALAREESQEAQLPALPPLPPTNS. Pro residues predominate over residues 269 to 278; it reads ALPPLPPTNS.

The protein resides in the nucleus. In terms of biological role, may play important roles in cardiac development and/or cardiac function. The chain is Leucine-rich repeat-containing protein 10 (LRRC10) from Bos taurus (Bovine).